Reading from the N-terminus, the 330-residue chain is D-cysteine desulfhydrase (330 aa).

Lysine 52 is subject to N6-(pyridoxal phosphate)lysine.

It belongs to the ACC deaminase/D-cysteine desulfhydrase family. In terms of assembly, homodimer. The cofactor is pyridoxal 5'-phosphate.

The enzyme catalyses D-cysteine + H2O = hydrogen sulfide + pyruvate + NH4(+) + H(+). Catalyzes the alpha,beta-elimination reaction of D-cysteine and of several D-cysteine derivatives. It could be a defense mechanism against D-cysteine. The sequence is that of D-cysteine desulfhydrase from Yersinia pseudotuberculosis serotype O:1b (strain IP 31758).